The chain runs to 1961 residues: Myosin-9 (1961 aa).

Residue Ala2 is modified to N-acetylalanine. The tract at residues 2-838 is mediates interaction with LIMCH1; the sequence is AQQAADKYLY…RLFTKVKPLL (837 aa). Lys8 is subject to N6-acetyllysine. The residue at position 11 (Tyr11) is a Phosphotyrosine. In terms of domain architecture, Myosin N-terminal SH3-like spans 27–77; the sequence is GAKKLVWVPSTKNGFEPASLKEEVGEEAIVELVENGKKVKVNKDDIQKMNP. The region spanning 81 to 776 is the Myosin motor domain; the sequence is SKVEDMAELT…VLAHLEEERD (696 aa). Lys102 is subject to N6-acetyllysine. 174–181 is an ATP binding site; sequence GESGAGKT. N6-acetyllysine is present on residues Lys299, Lys435, and Lys613. Residue Ser628 is modified to Phosphoserine. The segment at 654–676 is actin-binding; that stretch reads LAKLMATLRNTNPNFVCCIIPNH. The residue at position 754 (Tyr754) is a Phosphotyrosine. One can recognise an IQ domain in the interval 779 to 808; it reads ITDVIIGFQACCRGYLARKAFAKRQQQLTA. Residues 841 to 1927 are a coiled coil; sequence IRHEDELLAK…LKNKLRRGDM (1087 aa). Lys850 carries the post-translational modification N6-succinyllysine. Lys860, Lys975, and Lys1024 each carry N6-acetyllysine. A compositionally biased stretch (basic and acidic residues) spans 1035–1055; the sequence is RLRREEKQRQELEKTRRKLEG. Residues 1035 to 1057 form a disordered region; that stretch reads RLRREEKQRQELEKTRRKLEGDS. The residue at position 1114 (Ser1114) is a Phosphoserine. N6-acetyllysine is present on residues Lys1234 and Lys1249. The tract at residues 1331–1353 is disordered; the sequence is LKQMEDEKNSFREQLEEEEEEAK. Over residues 1332 to 1344 the composition is skewed to basic and acidic residues; that stretch reads KQMEDEKNSFREQ. Residues Lys1358, Lys1393, Lys1405, Lys1411, Lys1460, and Lys1639 each carry the N6-acetyllysine modification. Lys1670 carries the N6-succinyllysine modification. The residue at position 1715 (Ser1715) is a Phosphoserine. Residues Lys1794, Lys1803, and Lys1846 each carry the N6-acetyllysine modification. Residues 1878–1910 are disordered; that stretch reads RQLEEAEEEAQRANASRRKLQRELEDATETADA. Position 1924 is an omega-N-methylarginine (Arg1924). The segment at 1938–1961 is disordered; it reads KGTGDCSDEEVDGKADGADAKATE. Ser1944 bears the Phosphoserine mark. A compositionally biased stretch (basic and acidic residues) spans 1949–1961; that stretch reads DGKADGADAKATE.

Belongs to the TRAFAC class myosin-kinesin ATPase superfamily. Myosin family. In terms of assembly, myosin is a hexameric protein that consists of 2 heavy chain subunits (MHC), 2 alkali light chain subunits (MLC) and 2 regulatory light chain subunits (MLC-2). Interacts with RASIP1. Interacts with DDR1. Interacts with PDLIM2. Interacts with SVIL. Interacts with HTRA3. Interacts with Myo7a. Interacts with CFAP95. Interacts with LIMCH1; independently of the integration of MYH9 into the myosin complex. Interacts with RAB3A. Interacts with ZBED4. Interacts with S100A4; this interaction increases cell motility. Post-translationally, ISGylated. In terms of processing, ubiquitination.

It localises to the cytoplasm. The protein resides in the cytoskeleton. The protein localises to the cell cortex. Its subcellular location is the cytoplasmic vesicle. It is found in the secretory vesicle. It localises to the cortical granule. Cellular myosin that appears to play a role in cytokinesis, cell shape, and specialized functions such as secretion and capping. Required for cortical actin clearance prior to oocyte exocytosis. Promotes cell motility in conjunction with S100A4. During cell spreading, plays an important role in cytoskeleton reorganization, focal contact formation (in the margins but not the central part of spreading cells), and lamellipodial retraction; this function is mechanically antagonized by MYH10. The sequence is that of Myosin-9 (Myh9) from Rattus norvegicus (Rat).